The chain runs to 379 residues: Deoxyuridine 5'-triphosphate nucleotidohydrolase (379 aa).

The protein belongs to the dUTPase family. Mg(2+) serves as cofactor.

It catalyses the reaction dUTP + H2O = dUMP + diphosphate + H(+). Involved in nucleotide metabolism: produces dUMP, the immediate precursor of thymidine nucleotides and decreases the intracellular concentration of dUTP to avoid uracil incorporation into viral DNA. This chain is Deoxyuridine 5'-triphosphate nucleotidohydrolase, found in Human herpesvirus 7 (strain JI) (HHV-7).